We begin with the raw amino-acid sequence, 126 residues long: Large ribosomal subunit protein uL22 (126 aa).

The protein belongs to the universal ribosomal protein uL22 family. In terms of assembly, part of the 50S ribosomal subunit.

In terms of biological role, this protein binds specifically to 23S rRNA; its binding is stimulated by other ribosomal proteins, e.g. L4, L17, and L20. It is important during the early stages of 50S assembly. It makes multiple contacts with different domains of the 23S rRNA in the assembled 50S subunit and ribosome. The globular domain of the protein is located near the polypeptide exit tunnel on the outside of the subunit, while an extended beta-hairpin is found that lines the wall of the exit tunnel in the center of the 70S ribosome. The protein is Large ribosomal subunit protein uL22 of Caulobacter vibrioides (strain ATCC 19089 / CIP 103742 / CB 15) (Caulobacter crescentus).